The chain runs to 290 residues: 33 kDa chaperonin (290 aa).

2 cysteine pairs are disulfide-bonded: C235/C237 and C268/C271.

The protein belongs to the HSP33 family. Under oxidizing conditions two disulfide bonds are formed involving the reactive cysteines. Under reducing conditions zinc is bound to the reactive cysteines and the protein is inactive.

The protein resides in the cytoplasm. Functionally, redox regulated molecular chaperone. Protects both thermally unfolding and oxidatively damaged proteins from irreversible aggregation. Plays an important role in the bacterial defense system toward oxidative stress. This chain is 33 kDa chaperonin, found in Streptococcus pyogenes serotype M6 (strain ATCC BAA-946 / MGAS10394).